The primary structure comprises 167 residues: uncharacterized protein (167 aa).

Residues 95-114 form a disordered region; sequence AHSLHHQSHQSDVQVHAKGN.

This is an uncharacterized protein from Haemophilus influenzae (Bacteriophage HP1).